We begin with the raw amino-acid sequence, 76 residues long: Toxin Acra III-1 (76 aa).

An LCN-type CS-alpha/beta domain is found at 4-67 (PGNYPLDTRG…IWDAVKNHCT (64 aa)). Disulfide bonds link C18–C41, C27–C46, and C31–C48.

This sequence belongs to the long (3 C-C) scorpion toxin superfamily. Sodium channel inhibitor family. Beta subfamily. As to expression, expressed by the venom gland.

The protein resides in the secreted. In terms of biological role, binds to sodium channels (Nav) and affects the channel activation process. In Androctonus crassicauda (Arabian fat-tailed scorpion), this protein is Toxin Acra III-1.